A 110-amino-acid polypeptide reads, in one-letter code: Ribonuclease P protein component 4 (110 aa).

Zn(2+) is bound by residues cysteine 65, cysteine 68, cysteine 94, and cysteine 97.

Belongs to the eukaryotic/archaeal RNase P protein component 4 family. In terms of assembly, consists of a catalytic RNA component and at least 4-5 protein subunits. It depends on Zn(2+) as a cofactor.

Its subcellular location is the cytoplasm. It carries out the reaction Endonucleolytic cleavage of RNA, removing 5'-extranucleotides from tRNA precursor.. Functionally, part of ribonuclease P, a protein complex that generates mature tRNA molecules by cleaving their 5'-ends. This chain is Ribonuclease P protein component 4, found in Methanococcus maripaludis (strain C5 / ATCC BAA-1333).